The primary structure comprises 587 residues: Integrator complex subunit 14 (587 aa).

The VWFA domain occupies 3–113 (TLIALDASLS…NILQVVVFTD (111 aa)). 2 disordered regions span residues 190 to 211 (KSSD…KSEL) and 304 to 331 (REKS…DTSN).

Belongs to the Integrator subunit 14 family. Belongs to the multiprotein complex Integrator, at least composed of IntS1, IntS2, IntS3, IntS4, omd/IntS5, IntS6, defl/IntS7, IntS8, IntS9, IntS10, IntS11, IntS12, asun/IntS13, IntS14 and IntS15. The core complex associates with protein phosphatase 2A subunits mts/PP2A and Pp2A-29B, to form the Integrator-PP2A (INTAC) complex.

Its subcellular location is the nucleus. Component of the integrator complex, a multiprotein complex that terminates RNA polymerase II (Pol II) transcription in the promoter-proximal region of genes. The integrator complex provides a quality checkpoint during transcription elongation by driving premature transcription termination of transcripts that are unfavorably configured for transcriptional elongation: the complex terminates transcription by (1) catalyzing dephosphorylation of the C-terminal domain (CTD) of Pol II subunit Polr2A/Rbp1 and Spt5, and (2) degrading the exiting nascent RNA transcript via endonuclease activity. The integrator complex is also involved in the 3'-end processing of the U7 snRNA, and also the spliceosomal snRNAs U1, U2, U4 and U5. The chain is Integrator complex subunit 14 from Drosophila melanogaster (Fruit fly).